Here is a 241-residue protein sequence, read N- to C-terminus: Homeobox protein TGIF2LX (241 aa).

Disordered stretches follow at residues 1 to 56 (MEAA…PKGY) and 115 to 213 (RHGN…EYPD). Residues 21-39 (AKTQSPAQDTSTVSRNSAD) show a composition bias toward polar residues. Positions 48-111 (EHTKKPKGYL…INARRRILPD (64 aa)) form a DNA-binding region, homeobox; TALE-type.

This sequence belongs to the TALE/TGIF homeobox family.

It localises to the nucleus. Its function is as follows. May have a transcription role in testis. This chain is Homeobox protein TGIF2LX (TGIF2LX), found in Hylobates lar (Lar gibbon).